The chain runs to 121 residues: Large ribosomal subunit protein uL22 (121 aa).

It belongs to the universal ribosomal protein uL22 family. As to quaternary structure, part of the 50S ribosomal subunit.

This protein binds specifically to 23S rRNA; its binding is stimulated by other ribosomal proteins, e.g. L4, L17, and L20. It is important during the early stages of 50S assembly. It makes multiple contacts with different domains of the 23S rRNA in the assembled 50S subunit and ribosome. Its function is as follows. The globular domain of the protein is located near the polypeptide exit tunnel on the outside of the subunit, while an extended beta-hairpin is found that lines the wall of the exit tunnel in the center of the 70S ribosome. The chain is Large ribosomal subunit protein uL22 from Salinibacter ruber (strain DSM 13855 / M31).